The following is a 299-amino-acid chain: tRNA uridine(34) hydroxylase (299 aa).

Residues 132–226 (AGRPVVMLDT…YFEEVGGAHY (95 aa)) form the Rhodanese domain. Cysteine 186 acts as the Cysteine persulfide intermediate in catalysis.

It belongs to the TrhO family.

The catalysed reaction is uridine(34) in tRNA + AH2 + O2 = 5-hydroxyuridine(34) in tRNA + A + H2O. In terms of biological role, catalyzes oxygen-dependent 5-hydroxyuridine (ho5U) modification at position 34 in tRNAs. In Burkholderia pseudomallei (strain 1106a), this protein is tRNA uridine(34) hydroxylase.